A 289-amino-acid polypeptide reads, in one-letter code: Epoxyqueuosine reductase (289 aa).

The active-site Proton donor is D111. Positions 156 to 185 (QGDRPHSQHCGTCTRCLEACPTQAIVEPFV) constitute a 4Fe-4S ferredoxin-type domain. Residues C165, C168, C171, C175, C191, C219, C222, and C226 each coordinate [4Fe-4S] cluster.

The protein belongs to the QueG family. As to quaternary structure, monomer. It depends on cob(II)alamin as a cofactor. Requires [4Fe-4S] cluster as cofactor.

It localises to the cytoplasm. The catalysed reaction is epoxyqueuosine(34) in tRNA + AH2 = queuosine(34) in tRNA + A + H2O. Its pathway is tRNA modification; tRNA-queuosine biosynthesis. Its function is as follows. Catalyzes the conversion of epoxyqueuosine (oQ) to queuosine (Q), which is a hypermodified base found in the wobble positions of tRNA(Asp), tRNA(Asn), tRNA(His) and tRNA(Tyr). This is Epoxyqueuosine reductase from Synechocystis sp. (strain ATCC 27184 / PCC 6803 / Kazusa).